The following is a 129-amino-acid chain: Flagellar assembly factor FliW 2 (129 aa).

Belongs to the FliW family. In terms of assembly, interacts with translational regulator CsrA and flagellin(s).

Its subcellular location is the cytoplasm. Acts as an anti-CsrA protein, binds CsrA and prevents it from repressing translation of its target genes, one of which is flagellin. Binds to flagellin and participates in the assembly of the flagellum. The protein is Flagellar assembly factor FliW 2 of Helicobacter pylori (strain J99 / ATCC 700824) (Campylobacter pylori J99).